A 564-amino-acid polypeptide reads, in one-letter code: Nucleolus and neural progenitor protein (564 aa).

Residues 431–495 (GSRTSTSEHP…KRRCSGTVQR (65 aa)) are disordered. Residues 442 to 459 (RQRRSKYKVLSRQRKPQR) show a composition bias toward basic residues. The interval 442–460 (RQRRSKYKVLSRQRKPQRK) is nuclear localization signal. The span at 460–473 (KLQSTLLKETQQVP) shows a compositional bias: polar residues.

The protein belongs to the nepro family.

The protein resides in the nucleus. The protein localises to the nucleolus. Its function is as follows. May play a role in cortex development as part of the Notch signaling pathway. Downstream of Notch may repress the expression of proneural genes and inhibit neuronal differentiation thereby maintaining neural progenitors. May also play a role in preimplentation embryo development. The polypeptide is Nucleolus and neural progenitor protein (Mus musculus (Mouse)).